The following is a 132-amino-acid chain: Small ribosomal subunit protein uS8 (132 aa).

This sequence belongs to the universal ribosomal protein uS8 family. Part of the 30S ribosomal subunit. Contacts proteins S5 and S12.

One of the primary rRNA binding proteins, it binds directly to 16S rRNA central domain where it helps coordinate assembly of the platform of the 30S subunit. The polypeptide is Small ribosomal subunit protein uS8 (Psychrobacter arcticus (strain DSM 17307 / VKM B-2377 / 273-4)).